The following is a 428-amino-acid chain: 3-phosphoshikimate 1-carboxyvinyltransferase (428 aa).

Positions 20, 21, and 25 each coordinate 3-phosphoshikimate. Lys20 serves as a coordination point for phosphoenolpyruvate. Phosphoenolpyruvate contacts are provided by Gly93 and Arg122. 3-phosphoshikimate contacts are provided by Ser167, Gln169, Asp317, and Lys344. Residue Gln169 coordinates phosphoenolpyruvate. Asp317 functions as the Proton acceptor in the catalytic mechanism. Residues Arg348 and Arg390 each coordinate phosphoenolpyruvate.

This sequence belongs to the EPSP synthase family. Monomer.

The protein localises to the cytoplasm. The catalysed reaction is 3-phosphoshikimate + phosphoenolpyruvate = 5-O-(1-carboxyvinyl)-3-phosphoshikimate + phosphate. The protein operates within metabolic intermediate biosynthesis; chorismate biosynthesis; chorismate from D-erythrose 4-phosphate and phosphoenolpyruvate: step 6/7. Functionally, catalyzes the transfer of the enolpyruvyl moiety of phosphoenolpyruvate (PEP) to the 5-hydroxyl of shikimate-3-phosphate (S3P) to produce enolpyruvyl shikimate-3-phosphate and inorganic phosphate. The polypeptide is 3-phosphoshikimate 1-carboxyvinyltransferase (Leptospira biflexa serovar Patoc (strain Patoc 1 / ATCC 23582 / Paris)).